A 137-amino-acid polypeptide reads, in one-letter code: uncharacterized protein (137 aa).

Transmembrane regions (helical) follow at residues 20 to 39 (YGKIGVATAMAVGAAVGYAV), 44 to 61 (WFITVIAVLAGVALLSLV), 86 to 105 (VEIFSIGAALSGAVMLALDL), and 109 to 131 (AALALEFAVCCVLVLYLIFYGYY).

Its subcellular location is the cell membrane. This is an uncharacterized protein from Archaeoglobus fulgidus (strain ATCC 49558 / DSM 4304 / JCM 9628 / NBRC 100126 / VC-16).